A 117-amino-acid polypeptide reads, in one-letter code: Neurotoxic enhancer CSTX-13 (117 aa).

Positions 1–20 are cleaved as a signal peptide; the sequence is MKVLVIFAVLSLVIFSNCSA. Positions 21-47 are excised as a propeptide; the sequence is ETDEDFFGEESFEADDIIPFIAKEQVR. Disulfide bonds link Cys-50–Cys-65, Cys-57–Cys-74, Cys-64–Cys-95, and Cys-76–Cys-93. The propeptide occupies 82-87; it reads RSETAR. Thr-116 is modified (threonine amide).

This sequence belongs to the neurotoxin 19 (CSTX) family. 12 subfamily. Heterodimer of A and B chains; disulfide-linked. Interacts with CSTX-1 (AC P81694) (Kd=430 nM), and with CSTX-9 (AC P58604) (Kd=370 nM). Expressed by the venom gland.

It is found in the secreted. The protein resides in the target cell membrane. Synergistic toxin that induces or increases a cytolytic effect when combined with CSTX-1 (AC P81694) or CSTX-9 (AC P58604). When alone, has a weak insecticidal activity, with an unknown molecular target. This Cupiennius salei (American wandering spider) protein is Neurotoxic enhancer CSTX-13.